Here is a 220-residue protein sequence, read N- to C-terminus: Fructose-6-phosphate aldolase (220 aa).

Lys85 acts as the Schiff-base intermediate with substrate in catalysis.

Belongs to the transaldolase family. Type 3A subfamily. As to quaternary structure, homodecamer.

It is found in the cytoplasm. It catalyses the reaction beta-D-fructose 6-phosphate = dihydroxyacetone + D-glyceraldehyde 3-phosphate. Functionally, catalyzes the reversible formation of fructose 6-phosphate from dihydroxyacetone and D-glyceraldehyde 3-phosphate via an aldolization reaction. In Klebsiella pneumoniae subsp. pneumoniae (strain ATCC 700721 / MGH 78578), this protein is Fructose-6-phosphate aldolase.